A 417-amino-acid polypeptide reads, in one-letter code: Riboflavin biosynthesis protein RibBA (417 aa).

The DHBP synthase stretch occupies residues 1 to 204 (MTRLDSIERA…IADLIEWRRK (204 aa)). D-ribulose 5-phosphate contacts are provided by residues 28–29 (RE), D33, 141–145 (RPGHT), and E165. E29 contacts Mg(2+). H144 is a Mg(2+) binding site. Positions 205–417 (HEKHVQRIAE…LDDHPEADGA (213 aa)) are GTP cyclohydrolase II. Residue 259–263 (RVHSE) participates in GTP binding. Zn(2+) is bound by residues C264, C275, and C277. GTP contacts are provided by residues Q280, 303–305 (EGR), and T325. The active-site Proton acceptor; for GTP cyclohydrolase activity is the D337. The active-site Nucleophile; for GTP cyclohydrolase activity is R339. Residues T360 and K365 each contribute to the GTP site.

This sequence in the N-terminal section; belongs to the DHBP synthase family. It in the C-terminal section; belongs to the GTP cyclohydrolase II family. Mg(2+) is required as a cofactor. The cofactor is Mn(2+). It depends on Zn(2+) as a cofactor.

It carries out the reaction D-ribulose 5-phosphate = (2S)-2-hydroxy-3-oxobutyl phosphate + formate + H(+). The catalysed reaction is GTP + 4 H2O = 2,5-diamino-6-hydroxy-4-(5-phosphoribosylamino)-pyrimidine + formate + 2 phosphate + 3 H(+). It participates in cofactor biosynthesis; riboflavin biosynthesis; 2-hydroxy-3-oxobutyl phosphate from D-ribulose 5-phosphate: step 1/1. The protein operates within cofactor biosynthesis; riboflavin biosynthesis; 5-amino-6-(D-ribitylamino)uracil from GTP: step 1/4. Functionally, catalyzes the conversion of D-ribulose 5-phosphate to formate and 3,4-dihydroxy-2-butanone 4-phosphate. In terms of biological role, catalyzes the conversion of GTP to 2,5-diamino-6-ribosylamino-4(3H)-pyrimidinone 5'-phosphate (DARP), formate and pyrophosphate. This chain is Riboflavin biosynthesis protein RibBA, found in Mycobacteroides abscessus (strain ATCC 19977 / DSM 44196 / CCUG 20993 / CIP 104536 / JCM 13569 / NCTC 13031 / TMC 1543 / L948) (Mycobacterium abscessus).